The primary structure comprises 1888 residues: E3 ubiquitin-protein ligase UBR3 (1888 aa).

A disordered region spans residues 1 to 24; the sequence is MAAAAAAAVGGQQPSQPELPAPGL. The UBR-type zinc finger occupies 118–189; that stretch reads ALCGLVWTAN…ESGFCKRHQI (72 aa). The tract at residues 339 to 362 is disordered; that stretch reads GQVDSSDEDDQDGSQGLGKRKRVK. Ser-343 and Ser-344 each carry phosphoserine. 2 consecutive transmembrane segments (helical) span residues 761-781 and 919-939; these read MLEG…HLGM and LLHC…ILMD. Disordered stretches follow at residues 1008 to 1028 and 1164 to 1186; these read APEV…GSLQ and VPPK…RQKA. The segment covering 1016 to 1028 has biased composition (polar residues); the sequence is PASTSSDNLGSLQ. Residues 1168 to 1199 adopt a coiled-coil conformation; it reads KVTAAEKKTLDKEERRQKARERQQKLLAEFAS. The segment covering 1170-1186 has biased composition (basic and acidic residues); the sequence is TAAEKKTLDKEERRQKA. At Ser-1199 the chain carries Phosphoserine. Residues 1306-1364 form an RING-type; degenerate zinc finger; that stretch reads DSSCLLAVSIGWEGGVYVQTCGHTLHIDCHKSYMESLRNDQVLQGFSVDKGEFTCPLCR. The helical transmembrane segment at 1806-1826 threads the bilayer; sequence QNCGAGTGIFLLINASVIIII.

Belongs to the E3 ubiquitin-protein ligase UBR1-like family. As to quaternary structure, interacts with UBE2A and UBE2B.

The protein localises to the membrane. The catalysed reaction is S-ubiquitinyl-[E2 ubiquitin-conjugating enzyme]-L-cysteine + [acceptor protein]-L-lysine = [E2 ubiquitin-conjugating enzyme]-L-cysteine + N(6)-ubiquitinyl-[acceptor protein]-L-lysine.. It participates in protein modification; protein ubiquitination. E3 ubiquitin-protein ligase which is a component of the N-end rule pathway. Does not bind to proteins bearing specific N-terminal residues that are destabilizing according to the N-end rule, leading to their ubiquitination and subsequent degradation. May play a role in Shh signaling by mediating the ubiquitination of Kif7. May be important for MYH9 function in certain tissues, possibly by regulating the ubiquitination of MYH9 and consequently affecting its interaction with MYO7A. The chain is E3 ubiquitin-protein ligase UBR3 (UBR3) from Homo sapiens (Human).